The chain runs to 550 residues: Hydroxylamine reductase (550 aa).

4 residues coordinate [2Fe-2S] cluster: Cys3, Cys6, Cys18, and Cys25. Residues His249, Glu273, Cys317, Cys405, Cys433, Cys458, Glu492, and Lys494 each coordinate hybrid [4Fe-2O-2S] cluster. The residue at position 405 (Cys405) is a Cysteine persulfide.

Belongs to the HCP family. The cofactor is [2Fe-2S] cluster. Requires hybrid [4Fe-2O-2S] cluster as cofactor.

The protein localises to the cytoplasm. The enzyme catalyses A + NH4(+) + H2O = hydroxylamine + AH2 + H(+). Catalyzes the reduction of hydroxylamine to form NH(3) and H(2)O. In Salmonella choleraesuis (strain SC-B67), this protein is Hydroxylamine reductase.